Reading from the N-terminus, the 89-residue chain is UPF0335 protein Nham_1221 (89 aa).

This sequence belongs to the UPF0335 family.

This chain is UPF0335 protein Nham_1221, found in Nitrobacter hamburgensis (strain DSM 10229 / NCIMB 13809 / X14).